Reading from the N-terminus, the 486-residue chain is Cardiolipin synthase A (486 aa).

2 helical membrane-spanning segments follow: residues 3 to 23 (IFYNLIKCLIFSTYWLLIANI) and 38 to 58 (MSWLLTIYIIPFIGISIWFFF). PLD phosphodiesterase domains lie at 219–246 (VDVRQHRKIILIDNYIAYSGSMNLVDPY) and 399–426 (QKGLLHSKSILVDQQLSLIGTVNLDMRS). Catalysis depends on residues His-224, Lys-226, Asp-231, His-404, Lys-406, and Asp-411.

The protein belongs to the phospholipase D family. Cardiolipin synthase subfamily. ClsA sub-subfamily.

Its subcellular location is the cell inner membrane. It catalyses the reaction 2 a 1,2-diacyl-sn-glycero-3-phospho-(1'-sn-glycerol) = a cardiolipin + glycerol. Catalyzes the reversible phosphatidyl group transfer from one phosphatidylglycerol molecule to another to form cardiolipin (CL) (diphosphatidylglycerol) and glycerol. The protein is Cardiolipin synthase A of Buchnera aphidicola subsp. Acyrthosiphon pisum (strain APS) (Acyrthosiphon pisum symbiotic bacterium).